A 178-amino-acid chain; its full sequence is Flagellar transcriptional regulator FlhC (178 aa).

Residues Cys-138, Cys-141, Cys-158, and Cys-161 each coordinate Zn(2+).

This sequence belongs to the FlhC family. In terms of assembly, heterohexamer composed of two FlhC and four FlhD subunits. Each FlhC binds a FlhD dimer, forming a heterotrimer, and a hexamer assembles by dimerization of two heterotrimers. It depends on Zn(2+) as a cofactor.

The protein localises to the cytoplasm. Functionally, functions in complex with FlhD as a master transcriptional regulator that regulates transcription of several flagellar and non-flagellar operons by binding to their promoter region. Activates expression of class 2 flagellar genes, including fliA, which is a flagellum-specific sigma factor that turns on the class 3 genes. Also regulates genes whose products function in a variety of physiological pathways. This Erwinia tasmaniensis (strain DSM 17950 / CFBP 7177 / CIP 109463 / NCPPB 4357 / Et1/99) protein is Flagellar transcriptional regulator FlhC.